A 90-amino-acid polypeptide reads, in one-letter code: Small ribosomal subunit protein uS15 (90 aa).

The protein belongs to the universal ribosomal protein uS15 family. In terms of assembly, part of the 30S ribosomal subunit. Forms a bridge to the 50S subunit in the 70S ribosome, contacting the 23S rRNA.

One of the primary rRNA binding proteins, it binds directly to 16S rRNA where it helps nucleate assembly of the platform of the 30S subunit by binding and bridging several RNA helices of the 16S rRNA. In terms of biological role, forms an intersubunit bridge (bridge B4) with the 23S rRNA of the 50S subunit in the ribosome. In Helicobacter pylori (strain P12), this protein is Small ribosomal subunit protein uS15.